A 292-amino-acid chain; its full sequence is MYRFIIFFSLLALTASKVSEPEKDDEIAVKIPTKRSVSEPPKDDDIAVKIPMRKKRGIAIHPWQWESHLWPNAEVPYDIASHYTATERGIILSAMEAFRDVTCVRFRPRRSTDKHYLQINKHYQLERCFSYIGRQSSRWLFGTRDGKVETRMKLDPSCLLYNGRGTVMHELMHILGFYHEHQRDDRDRRIGGSASHYNFKIYQRAKSYYMGGYDANSIMHYNFGSVPWQKRDYFSPSDIRNINTLYKCNNRVVSKFPSTIPSTSTTTTKAPQFELFEKKQIESNSLFRRRRS.

The N-terminal stretch at 1 to 16 (MYRFIIFFSLLALTAS) is a signal peptide. Positions 56 to 249 (RGIAIHPWQW…RNINTLYKCN (194 aa)) constitute a Peptidase M12A domain. Cystine bridges form between C103–C248 and C128–C158. H169 serves as a coordination point for Zn(2+). Residue E170 is part of the active site. H173 and H179 together coordinate Zn(2+).

It depends on Zn(2+) as a cofactor.

The protein resides in the secreted. In terms of biological role, metalloprotease. The polypeptide is Zinc metalloproteinase nas-3 (nas-3) (Caenorhabditis elegans).